Reading from the N-terminus, the 75-residue chain is Tautomerase PptA (75 aa).

The Proton acceptor; via imino nitrogen role is filled by proline 2.

Belongs to the 4-oxalocrotonate tautomerase family. PptA subfamily. Homodimer.

The protein resides in the cytoplasm. In Escherichia coli (strain SMS-3-5 / SECEC), this protein is Tautomerase PptA.